The sequence spans 126 residues: Mating-type protein A1 (126 aa).

The homeobox DNA-binding region spans 70-126 (SPKGKSSISPQARAFLEQVFRRKQSLNSKEKEEVAKKCGITPLQVRVWFINKRMRSK).

This sequence belongs to the MATA1 family. As to quaternary structure, binds DNA with a high specificity as a heterodimer of A1 and ALPHA2.

It is found in the nucleus. Functionally, mating type proteins are sequence specific DNA-binding proteins that act as master switches in yeast differentiation by controlling gene expression in a cell type-specific fashion. Transcriptional corepressor that, in a/alpha diploid cells, binds cooperatively with the ALPHA2 protein to a 21-bp DNA sequence termed the haploid-specific gene (hsg) operator, to repress transcription of haploid-specific genes and of MATALPHA1. The chain is Mating-type protein A1 (MATA1) from Saccharomyces cerevisiae (Baker's yeast).